A 298-amino-acid chain; its full sequence is Nucleotide-binding protein GK3066 (298 aa).

Residue 17–24 (GMSGAGKT) participates in ATP binding. 68–71 (DLRS) serves as a coordination point for GTP.

This sequence belongs to the RapZ-like family.

Functionally, displays ATPase and GTPase activities. This chain is Nucleotide-binding protein GK3066, found in Geobacillus kaustophilus (strain HTA426).